A 117-amino-acid polypeptide reads, in one-letter code: Prefoldin subunit beta (117 aa).

Belongs to the prefoldin subunit beta family. As to quaternary structure, heterohexamer of two alpha and four beta subunits.

The protein resides in the cytoplasm. In terms of biological role, molecular chaperone capable of stabilizing a range of proteins. Seems to fulfill an ATP-independent, HSP70-like function in archaeal de novo protein folding. The protein is Prefoldin subunit beta (pfdB) of Pyrococcus horikoshii (strain ATCC 700860 / DSM 12428 / JCM 9974 / NBRC 100139 / OT-3).